A 129-amino-acid chain; its full sequence is Small ribosomal subunit protein uS8 (129 aa).

It belongs to the universal ribosomal protein uS8 family. As to quaternary structure, part of the 30S ribosomal subunit. Contacts proteins S5 and S12.

Its function is as follows. One of the primary rRNA binding proteins, it binds directly to 16S rRNA central domain where it helps coordinate assembly of the platform of the 30S subunit. The sequence is that of Small ribosomal subunit protein uS8 from Mycoplasma capricolum subsp. capricolum (strain California kid / ATCC 27343 / NCTC 10154).